We begin with the raw amino-acid sequence, 621 residues long: MALALVSVAPLVSMRRSLFSSPYELKSIDKTIPNLVMCRKRMSGTPSIRVSSTTSASNDDGVRRRVGDYRYNHWDDDLIDSLATSYEAPSYLERADTLVEAIKDRFNSMGVDDGERMSPLTDLYQRLWMVDSVERLGIDRHFQNEIKSALDYVFSYWKEKGIGRGRQSAVTDLNSTALGLRTLRLHGYPVSSDVLENFKDHNGQFTCSGIQTEGEIRGVLNLFRASLIAFPGEKVMEEAEIFSTMYLKHALQKIAVSSLSQEIEYLLEYGWHTNPPRLEARMYMEVFPQDTIYEQKLVELAKVEFNIFHSLQKRELQSLTRWWKHYGFPQLSFTRHIHVEYYTFGSCIATDPKQSAFRLCFAKMSYFVTVLDDIYDTYGTMEELELFTAAIKRWDPSVVDCLPEYMKGVYMAVYDTVNEMAKEAEKVQGRDTLNYVRQAWELYIDAYMPEAKWISSGYLPTFQEYLDNSKISFGTRITILQPILTLGEPLPHEILQEIDFPAKFNDLISVILRLKGDTRCYKADRARGEEASSVSCYMKDNAGITEEDAVHCINDMVNNLLKELNWELLKPDSNVPISCRKAAFDICRIFHHGYKYRDGYGDATIEVKNLVKRTVLEPVPL.

The transit peptide at 1 to 49 directs the protein to the chloroplast; it reads MALALVSVAPLVSMRRSLFSSPYELKSIDKTIPNLVMCRKRMSGTPSIR. Asp-372, Asp-376, and Asp-524 together coordinate Mg(2+). The short motif at 372-376 is the DDXXD motif element; that stretch reads DDIYD.

It belongs to the terpene synthase family. Tpsd subfamily. The cofactor is Mg(2+). It depends on Mn(2+) as a cofactor.

It is found in the plastid. The protein localises to the chloroplast. It carries out the reaction (2E)-geranyl diphosphate = (-)-beta-phellandrene + diphosphate. The protein operates within terpene metabolism; oleoresin biosynthesis. Its pathway is secondary metabolite biosynthesis; terpenoid biosynthesis. Monoterpene synthase (TPS) involved in the biosynthesis of monoterpene natural products included in conifer oleoresin secretions and volatile emissions; these compounds contribute to biotic and abiotic stress defense against herbivores and pathogens. Catalyzes the conversion of (2E)-geranyl diphosphate (GPP) to (-)-beta-phellandrene and, to a lower extent, to (-)-alpha-phellandrene. The chain is (-)-beta-phellandrene synthase 1, chloroplastic from Pinus contorta (Shore pine).